A 286-amino-acid polypeptide reads, in one-letter code: Homoserine kinase (286 aa).

ATP is bound at residue 78–88 (PLARGLGSSSS).

It belongs to the GHMP kinase family. Homoserine kinase subfamily.

It localises to the cytoplasm. The catalysed reaction is L-homoserine + ATP = O-phospho-L-homoserine + ADP + H(+). It functions in the pathway amino-acid biosynthesis; L-threonine biosynthesis; L-threonine from L-aspartate: step 4/5. Catalyzes the ATP-dependent phosphorylation of L-homoserine to L-homoserine phosphate. The protein is Homoserine kinase of Streptococcus equi subsp. zooepidemicus (strain H70).